The primary structure comprises 252 residues: Large ribosomal subunit protein uL29m (252 aa).

N6-acetyllysine is present on K146.

The protein belongs to the universal ribosomal protein uL29 family. Component of the mitochondrial ribosome large subunit (39S) which comprises a 16S rRNA and about 50 distinct proteins.

The protein localises to the mitochondrion. The sequence is that of Large ribosomal subunit protein uL29m (MRPL47) from Bos taurus (Bovine).